The sequence spans 314 residues: ATP synthase gamma chain (314 aa).

Belongs to the ATPase gamma chain family. As to quaternary structure, F-type ATPases have 2 components, CF(1) - the catalytic core - and CF(0) - the membrane proton channel. CF(1) has five subunits: alpha(3), beta(3), gamma(1), delta(1), epsilon(1). CF(0) has three main subunits: a, b and c.

Its subcellular location is the cellular thylakoid membrane. In terms of biological role, produces ATP from ADP in the presence of a proton gradient across the membrane. The gamma chain is believed to be important in regulating ATPase activity and the flow of protons through the CF(0) complex. The polypeptide is ATP synthase gamma chain (Gloeothece citriformis (strain PCC 7424) (Cyanothece sp. (strain PCC 7424))).